A 65-amino-acid polypeptide reads, in one-letter code: Small ribosomal subunit protein eS17 (65 aa).

It belongs to the eukaryotic ribosomal protein eS17 family.

This is Small ribosomal subunit protein eS17 from Methanocella arvoryzae (strain DSM 22066 / NBRC 105507 / MRE50).